We begin with the raw amino-acid sequence, 265 residues long: Orotidine 5'-phosphate decarboxylase (265 aa).

Substrate-binding positions include Asp37, 59–61, 91–100, Tyr217, and Arg235; these read KTH and DRKFADIGNT. Lys93 functions as the Proton donor in the catalytic mechanism.

The protein belongs to the OMP decarboxylase family.

It carries out the reaction orotidine 5'-phosphate + H(+) = UMP + CO2. It functions in the pathway pyrimidine metabolism; UMP biosynthesis via de novo pathway; UMP from orotate: step 2/2. The protein is Orotidine 5'-phosphate decarboxylase (URA3) of Diutina rugosa (Yeast).